Reading from the N-terminus, the 88-residue chain is Small ribosomal subunit protein bS20 (88 aa).

The tract at residues 1 to 28 (MANIKSQIKRNRQNEKRRLRNKSVKSSL) is disordered. A compositionally biased stretch (basic residues) spans 7 to 23 (QIKRNRQNEKRRLRNKS).

The protein belongs to the bacterial ribosomal protein bS20 family.

Its function is as follows. Binds directly to 16S ribosomal RNA. This Salinispora tropica (strain ATCC BAA-916 / DSM 44818 / JCM 13857 / NBRC 105044 / CNB-440) protein is Small ribosomal subunit protein bS20.